A 308-amino-acid polypeptide reads, in one-letter code: uncharacterized protein (308 aa).

A coiled-coil region spans residues 212–242 (EADKMTIDYMRELDNLQRQYDGLVDEDKALH).

This is an uncharacterized protein from Ostreid herpesvirus 1 (isolate France) (OsHV-1).